The sequence spans 284 residues: UPF0294 protein VV2535 (284 aa).

The protein belongs to the UPF0294 family.

It localises to the cytoplasm. The protein is UPF0294 protein VV2535 of Vibrio vulnificus (strain YJ016).